The sequence spans 199 residues: dITP/XTP pyrophosphatase (199 aa).

Substrate is bound at residue 7 to 12; that stretch reads SNNRGK. Mg(2+)-binding residues include aspartate 39 and aspartate 68. Aspartate 68 serves as the catalytic Proton acceptor. Substrate contacts are provided by residues alanine 69, 154–157, lysine 177, and 182–183; these read FGFD and HR.

It belongs to the HAM1 NTPase family. In terms of assembly, homodimer. Mg(2+) is required as a cofactor.

It catalyses the reaction XTP + H2O = XMP + diphosphate + H(+). The enzyme catalyses dITP + H2O = dIMP + diphosphate + H(+). It carries out the reaction ITP + H2O = IMP + diphosphate + H(+). In terms of biological role, pyrophosphatase that catalyzes the hydrolysis of nucleoside triphosphates to their monophosphate derivatives, with a high preference for the non-canonical purine nucleotides XTP (xanthosine triphosphate), dITP (deoxyinosine triphosphate) and ITP. Seems to function as a house-cleaning enzyme that removes non-canonical purine nucleotides from the nucleotide pool, thus preventing their incorporation into DNA/RNA and avoiding chromosomal lesions. The polypeptide is dITP/XTP pyrophosphatase (Paracidovorax citrulli (strain AAC00-1) (Acidovorax citrulli)).